We begin with the raw amino-acid sequence, 315 residues long: Homoserine kinase (315 aa).

97-107 is an ATP binding site; it reads PPARGLGSSAT.

The protein belongs to the GHMP kinase family. Homoserine kinase subfamily.

The protein resides in the cytoplasm. It carries out the reaction L-homoserine + ATP = O-phospho-L-homoserine + ADP + H(+). It functions in the pathway amino-acid biosynthesis; L-threonine biosynthesis; L-threonine from L-aspartate: step 4/5. Its function is as follows. Catalyzes the ATP-dependent phosphorylation of L-homoserine to L-homoserine phosphate. This chain is Homoserine kinase, found in Prochlorococcus marinus subsp. pastoris (strain CCMP1986 / NIES-2087 / MED4).